We begin with the raw amino-acid sequence, 171 residues long: Adenine phosphoribosyltransferase (171 aa).

This sequence belongs to the purine/pyrimidine phosphoribosyltransferase family. In terms of assembly, homodimer.

It localises to the cytoplasm. It catalyses the reaction AMP + diphosphate = 5-phospho-alpha-D-ribose 1-diphosphate + adenine. The protein operates within purine metabolism; AMP biosynthesis via salvage pathway; AMP from adenine: step 1/1. In terms of biological role, catalyzes a salvage reaction resulting in the formation of AMP, that is energically less costly than de novo synthesis. In Acetivibrio thermocellus (strain ATCC 27405 / DSM 1237 / JCM 9322 / NBRC 103400 / NCIMB 10682 / NRRL B-4536 / VPI 7372) (Clostridium thermocellum), this protein is Adenine phosphoribosyltransferase.